A 249-amino-acid chain; its full sequence is MQSRVVSSAVMFLGGIAGAVKSLPAFVTSSFGAIVDPEDGRGSAAFAEITALTALHHMQRLMMADEMGRSILKERPQVTDETLEFAKTQPEGTFGYRYAAFMKRNNFLPSGRAPILHVSDPTLAYVMLRYRQIHDFVHAYVGLGRTIEEELAVKLFEWQHTGLPVGLMAVLGGMPWLRMDQILNMGMYNEWARANAPRQLHGKRFVSCILNVPWEWYLDKPYEQLVDDVGIVPLDAFLKERKSGGLHDS.

Zn(2+)-binding residues include H134, D135, H138, and E150.

The protein belongs to the COQ4 family. In terms of assembly, component of a multi-subunit COQ enzyme complex. Zn(2+) is required as a cofactor.

It localises to the mitochondrion inner membrane. The catalysed reaction is a 4-hydroxy-3-methoxy-5-(all-trans-polyprenyl)benzoate + H(+) = a 2-methoxy-6-(all-trans-polyprenyl)phenol + CO2. Its pathway is cofactor biosynthesis; ubiquinone biosynthesis. Its function is as follows. Lyase that catalyzes the C1-decarboxylation of 4-hydroxy-3-methoxy-5-(all-trans-polyprenyl)benzoic acid into 2-methoxy-6-(all-trans-polyprenyl)phenol during ubiquinone biosynthesis. This is Ubiquinone biosynthesis protein COQ4 homolog, mitochondrial from Trypanosoma brucei brucei (strain 927/4 GUTat10.1).